A 493-amino-acid polypeptide reads, in one-letter code: Glutamyl-tRNA(Gln) amidotransferase subunit A (493 aa).

Residues Lys79 and Ser159 each act as charge relay system in the active site. The Acyl-ester intermediate role is filled by Ser183.

This sequence belongs to the amidase family. GatA subfamily. Heterotrimer of A, B and C subunits.

The catalysed reaction is L-glutamyl-tRNA(Gln) + L-glutamine + ATP + H2O = L-glutaminyl-tRNA(Gln) + L-glutamate + ADP + phosphate + H(+). Its function is as follows. Allows the formation of correctly charged Gln-tRNA(Gln) through the transamidation of misacylated Glu-tRNA(Gln) in organisms which lack glutaminyl-tRNA synthetase. The reaction takes place in the presence of glutamine and ATP through an activated gamma-phospho-Glu-tRNA(Gln). The protein is Glutamyl-tRNA(Gln) amidotransferase subunit A of Brucella ovis (strain ATCC 25840 / 63/290 / NCTC 10512).